The following is a 299-amino-acid chain: Protoheme IX farnesyltransferase 1 (299 aa).

9 helical membrane-spanning segments follow: residues 25-45 (VVVL…RAGV), 47-67 (WSVL…AAVV), 95-115 (LPAL…LLAF), 119-139 (LTAW…TGFL), 147-167 (IVIG…AVSG), 173-193 (PLLL…ALAI), 217-237 (ALHI…PYAI), 243-263 (LYLA…WVLY), and 279-299 (IGYL…LLNL).

Belongs to the UbiA prenyltransferase family. Protoheme IX farnesyltransferase subfamily.

The protein localises to the cell inner membrane. It catalyses the reaction heme b + (2E,6E)-farnesyl diphosphate + H2O = Fe(II)-heme o + diphosphate. The protein operates within porphyrin-containing compound metabolism; heme O biosynthesis; heme O from protoheme: step 1/1. Functionally, converts heme B (protoheme IX) to heme O by substitution of the vinyl group on carbon 2 of heme B porphyrin ring with a hydroxyethyl farnesyl side group. The protein is Protoheme IX farnesyltransferase 1 of Pseudomonas entomophila (strain L48).